The following is a 427-amino-acid chain: Light-independent protochlorophyllide reductase subunit N (427 aa).

The [4Fe-4S] cluster site is built by Cys-28, Cys-53, and Cys-114.

It belongs to the BchN/ChlN family. In terms of assembly, protochlorophyllide reductase is composed of three subunits; BchL, BchN and BchB. Forms a heterotetramer of two BchB and two BchN subunits. Requires [4Fe-4S] cluster as cofactor.

The catalysed reaction is chlorophyllide a + oxidized 2[4Fe-4S]-[ferredoxin] + 2 ADP + 2 phosphate = protochlorophyllide a + reduced 2[4Fe-4S]-[ferredoxin] + 2 ATP + 2 H2O. It participates in porphyrin-containing compound metabolism; bacteriochlorophyll biosynthesis (light-independent). In terms of biological role, component of the dark-operative protochlorophyllide reductase (DPOR) that uses Mg-ATP and reduced ferredoxin to reduce ring D of protochlorophyllide (Pchlide) to form chlorophyllide a (Chlide). This reaction is light-independent. The NB-protein (BchN-BchB) is the catalytic component of the complex. In Jannaschia sp. (strain CCS1), this protein is Light-independent protochlorophyllide reductase subunit N.